A 1481-amino-acid chain; its full sequence is DNA excision repair protein ERCC-6 (1481 aa).

Positions 1 to 506 (MFHEEVPNST…GFLFKKLFKY (506 aa)) are N-terminal domain; essential for its chromatin remodeling activity. Serine 158 carries the post-translational modification Phosphoserine; by CDK2. Lysine 170 carries the post-translational modification N6-methylated lysine; by EHMT2. A Glycyl lysine isopeptide (Lys-Gly) (interchain with G-Cter in SUMO2) cross-link involves residue lysine 256. At lysine 298 the chain carries N6-methylated lysine; by EHMT2. Residues 309–452 (AIETKADQRS…RKVARRQDDG (144 aa)) are disordered. Positions 327–337 (RLKKHSRKLQR) are enriched in basic residues. Positions 353–363 (KPLEPEVRPEA) are enriched in basic and acidic residues. Acidic residues-rich tracts occupy residues 378 to 390 (DGEE…EEEG) and 420 to 435 (EIDD…EDEA). Phosphoserine is present on residues serine 428 and serine 429. Position 444 is an N6-methylated lysine; by EHMT2 (lysine 444). A phosphoserine mark is found at serine 482 and serine 485. The Helicase ATP-binding domain occupies 515-691 (WELHCQQAGG…WSLFDFIFPG (177 aa)). ATP is bound at residue 528 to 535 (DEMGLGKT). Positions 642-645 (DEGH) match the DEAH box motif. The Helicase C-terminal domain occupies 839–998 (VVESLLKIWH…RRFFKSNDLY (160 aa)). Disordered stretches follow at residues 1040–1096 (LGTD…NRAS), 1114–1238 (SVMS…DRSS), and 1307–1372 (GHRG…GAPS). Lysine 1047 carries the N6-methylated lysine; by EHMT2 modification. Polar residues predominate over residues 1138–1147 (ASTSEKQGSS). The segment covering 1192 to 1201 (QPKQKAKNSK) has biased composition (basic residues). A compositionally biased stretch (basic and acidic residues) spans 1202 to 1212 (HCRDAKFEGTR). Polar residues predominate over residues 1330 to 1345 (LPVQHPSSLTEKTQNN). Over residues 1346-1364 (MKKEGKAHTPEHFSGKEDG) the composition is skewed to basic and acidic residues. Positions 1373-1385 (SSSLLARMRARNH) match the CSA-interacting motif (CIM) motif. A ubiquitin-binding domain (UBD) region spans residues 1387 to 1416 (ILPERLESDSEHLAEAAAVPPCGTEHDDLL). The tract at residues 1417–1481 (VDMRNFIAFQ…GIWKLKPEYC (65 aa)) is winged-helix domain (WHD). The tract at residues 1434–1481 (STQEILQEFESKLSVAQSCVFRELLRNLCNFHRTPGGEGIWKLKPEYC) is essential for its interaction with RNA polymerase II, transcription-coupled nucleotide excision repair activity, association with chromatin after UV irradiation and for mediating the UV-induced translocation of ERRC8 to the nuclear matrix.

It belongs to the SNF2/RAD54 helicase family. As to quaternary structure, homodimer. Binds DNA. Interacts with ERCC8. Interacts with RNA polymerase II; interaction is enhanced by UV irradiation. Component of the B-WICH complex, at least composed of SMARCA5/SNF2H, BAZ1B/WSTF, SF3B1, DEK, MYO1C, ERCC6, MYBBP1A and DDX21. Interacts with KIAA1530/UVSSA. Interacts with ELOA and CUL5; the interaction is induced by DNA damaging agents or by inhibitors of RNA polymerase II elongation. Interacts (via WHD region) with RIF1. Interacts with SMARCC2/BAF170, SMARCB1/BAF47 and the neuron-specific chromatin remodeling complex (nBAF complex). Interacts with ERCC5/XPG (via C-terminus); the interaction stimulates ERCC6/CSB binding to DNA repair bubble and ERCC6/CSB ATPase activity. May form a complex composed of RNA polymerase II, ERCC6/CSB and ERCC5/XPG which associates with the DNA repair bubble during transcription-coupled nucleotide excision repair. Interacts with CAND1, CSTF1, DDX3X, DDX5, DDX17, DDX23, DHX36, HDAC1, HNRNPU, MTA2, PRPF3, PSMD3, RBBP4, SFPQ, SMARCA1, SMARCA2, TOP1, USP7 and XRCC5. In terms of processing, phosphorylated in a cell cycle-dependent manner at Ser-158 by cyclin A-CDK2 in response to DNA damage. Phosphorylation at this site promotes the intramolecular interaction of the N-terminal domain with the helicase ATP-binding domain, thereby probably releasing the inhibitory effect of the N-terminal domain on its ATPase activity. Phosphorylation is essential for its chromatin remodeling activity. Post-translationally, ubiquitinated at the C-terminus. Ubiquitination by the CSA complex leads to ERCC6 proteasomal degradation in a UV-dependent manner. Stabilized following interaction with KIAA1530/UVSSA, which promotes recruitment of deubiquitinating enzyme USP7, leading to deubiquitination of ERCC6 thereby preventing UV-induced degradation of ERCC6 by the proteasome.

Its subcellular location is the nucleus. The protein localises to the chromosome. It catalyses the reaction ATP + H2O = ADP + phosphate + H(+). Essential factor involved in transcription-coupled nucleotide excision repair (TC-NER), a process during which RNA polymerase II-blocking lesions are rapidly removed from the transcribed strand of active genes. Plays a central role in the initiation of the TC-NER process: specifically recognizes and binds RNA polymerase II stalled at a lesion, and mediates recruitment of ERCC8/CSA, initiating DNA damage excision by TFIIH recruitment. Upon DNA-binding, it locally modifies DNA conformation by wrapping the DNA around itself, thereby modifying the interface between stalled RNA polymerase II and DNA. Acts as a chromatin remodeler at DSBs; DNA-dependent ATPase-dependent activity is essential for this function. Plays an important role in regulating the choice of the DNA double-strand breaks (DSBs) repair pathway and G2/M checkpoint activation; DNA-dependent ATPase activity is essential for this function. Regulates the DNA repair pathway choice by inhibiting non-homologous end joining (NHEJ), thereby promoting the homologous recombination (HR)-mediated repair of DSBs during the S/G2 phases of the cell cycle. Mediates the activation of the ATM- and CHEK2-dependent DNA damage responses thus preventing premature entry of cells into mitosis following the induction of DNA DSBs. Remodels chromatin by evicting histones from chromatin flanking DSBs, limiting RIF1 accumulation at DSBs thereby promoting BRCA1-mediated HR. Required for stable recruitment of ELOA and CUL5 to DNA damage sites. Also involved in UV-induced translocation of ERCC8 to the nuclear matrix. Essential for neuronal differentiation and neuritogenesis; regulates transcription and chromatin remodeling activities required during neurogenesis. This chain is DNA excision repair protein ERCC-6 (Ercc6), found in Mus musculus (Mouse).